Consider the following 269-residue polypeptide: Phosphate import ATP-binding protein PstB 1 (269 aa).

One can recognise an ABC transporter domain in the interval 23–264; the sequence is LSTEDLNVYY…PKIKAAEDYV (242 aa). An ATP-binding site is contributed by 55 to 62; that stretch reads GASGSGKS.

It belongs to the ABC transporter superfamily. Phosphate importer (TC 3.A.1.7) family. The complex is composed of two ATP-binding proteins (PstB), two transmembrane proteins (PstC and PstA) and a solute-binding protein (PstS).

It localises to the cell membrane. It carries out the reaction phosphate(out) + ATP + H2O = ADP + 2 phosphate(in) + H(+). Its function is as follows. Part of the ABC transporter complex PstSACB involved in phosphate import. Responsible for energy coupling to the transport system. This is Phosphate import ATP-binding protein PstB 1 from Latilactobacillus sakei subsp. sakei (strain 23K) (Lactobacillus sakei subsp. sakei).